Here is a 153-residue protein sequence, read N- to C-terminus: UPF0756 membrane protein lmo1568 (153 aa).

4 helical membrane-spanning segments follow: residues 6–26 (MLFLLLFLLLGLIAKNNSLII), 54–74 (WGVTIITVAILIPIATGQIGF), 80–100 (SFKSAAGWIGLGAGIAVSILA), and 117–137 (LVFGTILAVVLFRGIAAGPVI).

The protein belongs to the UPF0756 family.

It localises to the cell membrane. In Listeria monocytogenes serovar 1/2a (strain ATCC BAA-679 / EGD-e), this protein is UPF0756 membrane protein lmo1568.